The following is a 102-amino-acid chain: MLPDLSPHLHTKECNMLIEFLQRCHSEKPIGKMIGKCSYWDEAVWQCTKKERIWRRDNNPAYKRRIVELRSLPEKYWTPALHKLKEDGVLIGGADQSQGCKI.

One can recognise a CHCH domain in the interval 11–55; sequence TKECNMLIEFLQRCHSEKPIGKMIGKCSYWDEAVWQCTKKERIWR. 2 consecutive short sequence motifs (cx9C motif) follow at residues 14–24 and 37–47; these read CNMLIEFLQRC and CSYWDEAVWQC. 2 disulfides stabilise this stretch: cysteine 14–cysteine 47 and cysteine 24–cysteine 37.

It belongs to the CMC family.

The protein resides in the mitochondrion. Functionally, may be involved in cytochrome c oxidase biogenesis. This is COX assembly mitochondrial protein 2 homolog from Caenorhabditis elegans.